Here is a 276-residue protein sequence, read N- to C-terminus: Proteasome subunit beta type-8 (276 aa).

A disordered region spans residues 1 to 33; that stretch reads MALLDVCGAPRGQRPESALPVAGSGRRSDPGHY. The propeptide at 1-72 is removed in mature form; the sequence is MALLDVCGAP…RNVQIEMAHG (72 aa). Asp5 carries the phosphothreonine modification. Catalysis depends on Thr73, which acts as the Nucleophile.

It belongs to the peptidase T1B family. As to quaternary structure, the 26S proteasome consists of a 20S proteasome core and two 19S regulatory subunits. The 20S proteasome core is composed of 28 subunits that are arranged in four stacked rings, resulting in a barrel-shaped structure. The two end rings are each formed by seven alpha subunits, and the two central rings are each formed by seven beta subunits. The catalytic chamber with the active sites is on the inside of the barrel. Component of the immunoproteasome, where it displaces the equivalent housekeeping subunit PSMB5. Component of the spermatoproteasome, a form of the proteasome specifically found in testis. Directly interacts with POMP. Interacts with TAP1. (Microbial infection) Interacts with HIV-1 TAT protein. Autocleaved. The resulting N-terminal Thr residue of the mature subunit is responsible for the nucleophile proteolytic activity.

It is found in the cytoplasm. Its subcellular location is the nucleus. It carries out the reaction Cleavage of peptide bonds with very broad specificity.. Its function is as follows. The proteasome is a multicatalytic proteinase complex which is characterized by its ability to cleave peptides with Arg, Phe, Tyr, Leu, and Glu adjacent to the leaving group at neutral or slightly basic pH. The proteasome has an ATP-dependent proteolytic activity. This subunit is involved in antigen processing to generate class I binding peptides. Replacement of PSMB5 by PSMB8 increases the capacity of the immunoproteasome to cleave model peptides after hydrophobic and basic residues. Involved in the generation of spliced peptides resulting from the ligation of two separate proteasomal cleavage products that are not contiguous in the parental protein. Acts as a major component of interferon gamma-induced sensitivity. Plays a key role in apoptosis via the degradation of the apoptotic inhibitor MCL1. May be involved in the inflammatory response pathway. In cancer cells, substitution of isoform 1 (E2) by isoform 2 (E1) results in immunoproteasome deficiency. Required for the differentiation of preadipocytes into adipocytes. This Homo sapiens (Human) protein is Proteasome subunit beta type-8 (PSMB8).